Here is a 236-residue protein sequence, read N- to C-terminus: NAD-dependent protein deacetylase (236 aa).

One can recognise a Deacetylase sirtuin-type domain in the interval 1–236 (MIKDWLQESN…EFLRSISNEG (236 aa)). Residues Ala-18, Thr-22, Phe-29, Arg-30, Gln-96, Val-98, Asp-99, and His-114 each coordinate NAD(+). Phe-29 lines the nicotinamide pocket. 2 residues coordinate nicotinamide: Val-98 and Asp-99. His-114 functions as the Proton acceptor in the catalytic mechanism. Residues Cys-122, Cys-125, Cys-141, and Cys-143 each coordinate Zn(2+). NAD(+)-binding residues include Ser-181, Ser-182, Asn-206, and Ile-225.

It belongs to the sirtuin family. Class U subfamily. Zn(2+) serves as cofactor.

It localises to the cytoplasm. It carries out the reaction N(6)-acetyl-L-lysyl-[protein] + NAD(+) + H2O = 2''-O-acetyl-ADP-D-ribose + nicotinamide + L-lysyl-[protein]. Functionally, NAD-dependent protein deacetylase which modulates the activities of several enzymes which are inactive in their acetylated form. The sequence is that of NAD-dependent protein deacetylase from Oceanobacillus iheyensis (strain DSM 14371 / CIP 107618 / JCM 11309 / KCTC 3954 / HTE831).